Here is a 179-residue protein sequence, read N- to C-terminus: Interferon lambda-4 (179 aa).

Positions 1–21 (MRPSVWAAVAAGLWVLCTVIA) are cleaved as a signal peptide. The disordered stretch occupies residues 130–149 (SSRKVPGAQKRRHKPRRADS).

The protein belongs to the lambda interferon family.

It localises to the cytoplasm. Its subcellular location is the secreted. In terms of biological role, cytokine that may trigger an antiviral response activating the JAK-STAT pathway and up-regulating specifically some interferon-stimulated genes. This is Interferon lambda-4 (IFNL4) from Homo sapiens (Human).